A 185-amino-acid polypeptide reads, in one-letter code: Cuticle protein 18.6, isoform B (185 aa).

Repeat copies occupy residues 21–24 (AAPA), 33–36 (AAPV), 41–44 (AAPV), 133–136 (AAPV), 139–142 (AAPV), and 150–153 (AAPV). Residues 64–134 (HPQYSFAYNV…KEAGAHPAAA (71 aa)) form the Chitin-binding type R&amp;R domain.

In terms of biological role, component of the cuticle of migratory locust which contains more than 100 different structural proteins. The protein is Cuticle protein 18.6, isoform B of Locusta migratoria (Migratory locust).